The following is a 449-amino-acid chain: Signal recognition particle protein (449 aa).

GTP is bound by residues 109–116 (GLQGGGKT), 191–195 (DTAGR), and 249–252 (SRID).

This sequence belongs to the GTP-binding SRP family. SRP54 subfamily. As to quaternary structure, part of the signal recognition particle protein translocation system, which is composed of SRP and FtsY. SRP is a ribonucleoprotein composed of Ffh and a 4.5S RNA molecule.

Its subcellular location is the cytoplasm. It catalyses the reaction GTP + H2O = GDP + phosphate + H(+). Involved in targeting and insertion of nascent membrane proteins into the cytoplasmic membrane. Binds to the hydrophobic signal sequence of the ribosome-nascent chain (RNC) as it emerges from the ribosomes. The SRP-RNC complex is then targeted to the cytoplasmic membrane where it interacts with the SRP receptor FtsY. Interaction with FtsY leads to the transfer of the RNC complex to the Sec translocase for insertion into the membrane, the hydrolysis of GTP by both Ffh and FtsY, and the dissociation of the SRP-FtsY complex into the individual components. The polypeptide is Signal recognition particle protein (Rickettsia typhi (strain ATCC VR-144 / Wilmington)).